A 207-amino-acid polypeptide reads, in one-letter code: Large ribosomal subunit protein uL4 (207 aa).

Residues 58 to 85 (AGSGKKPFKQKGTGQARQGCRRAPQYPG) form a disordered region.

Belongs to the universal ribosomal protein uL4 family. Part of the 50S ribosomal subunit.

Its function is as follows. One of the primary rRNA binding proteins, this protein initially binds near the 5'-end of the 23S rRNA. It is important during the early stages of 50S assembly. It makes multiple contacts with different domains of the 23S rRNA in the assembled 50S subunit and ribosome. Functionally, forms part of the polypeptide exit tunnel. This chain is Large ribosomal subunit protein uL4, found in Geotalea uraniireducens (strain Rf4) (Geobacter uraniireducens).